We begin with the raw amino-acid sequence, 541 residues long: L-ornithine N(5)-monooxygenase (541 aa).

FAD contacts are provided by residues 50-58 (EKQPEFQWH) and Q69. A substrate-binding site is contributed by K74. 223-226 (SGQS) provides a ligand contact to NADP(+). Substrate-binding positions include 269–272 (NEIF) and N300. 300-302 (NYS) contacts NADP(+). Residues 430-474 (TEIPKGPDGSLFDASEEEATWRPASPITPASPSPPSTPTSSALSQ) are disordered. 520 to 522 (SLL) contributes to the FAD binding site. Substrate is bound at residue S523.

It belongs to the lysine N(6)-hydroxylase/L-ornithine N(5)-oxygenase family. As to quaternary structure, homotetramer. Requires FAD as cofactor.

It carries out the reaction L-ornithine + NADPH + O2 = N(5)-hydroxy-L-ornithine + NADP(+) + H2O. The catalysed reaction is L-ornithine + NADH + O2 = N(5)-hydroxy-L-ornithine + NAD(+) + H2O. It functions in the pathway siderophore biosynthesis. Its function is as follows. L-ornithine N(5)-monooxygenase; part of the siderophore basidioferrin biosynthetic pathway. The biosynthesis of basidioferrin depends on the hydroxylation of ornithine to N(5)-hydroxyornithine, catalyzed by the monooxygenase SMO1. The second step, the acylation of N(5)-hydroxy-L-ornithine is catalyzed by a not yet identified N-acyltransferase. Finally, assembly of basidioferrin is catalyzed by the nonribosomal peptide synthase (NRPS) NPS2 via amide bond formation between three L-AHO molecules to release the linear L-AHO trimer. This is L-ornithine N(5)-monooxygenase (SMO1) from Ceriporiopsis subvermispora (strain B) (White-rot fungus).